We begin with the raw amino-acid sequence, 360 residues long: Peptide chain release factor 1 (360 aa).

An N5-methylglutamine modification is found at glutamine 237.

The protein belongs to the prokaryotic/mitochondrial release factor family. Post-translationally, methylated by PrmC. Methylation increases the termination efficiency of RF1.

It localises to the cytoplasm. Peptide chain release factor 1 directs the termination of translation in response to the peptide chain termination codons UAG and UAA. This chain is Peptide chain release factor 1, found in Cellvibrio japonicus (strain Ueda107) (Pseudomonas fluorescens subsp. cellulosa).